A 188-amino-acid polypeptide reads, in one-letter code: Elongation factor P (188 aa).

This sequence belongs to the elongation factor P family.

It localises to the cytoplasm. It functions in the pathway protein biosynthesis; polypeptide chain elongation. Involved in peptide bond synthesis. Stimulates efficient translation and peptide-bond synthesis on native or reconstituted 70S ribosomes in vitro. Probably functions indirectly by altering the affinity of the ribosome for aminoacyl-tRNA, thus increasing their reactivity as acceptors for peptidyl transferase. The sequence is that of Elongation factor P from Phytoplasma mali (strain AT).